The primary structure comprises 126 residues: Methylglyoxal synthase (126 aa).

The MGS-like domain maps to Met-1–Glu-126. Substrate-binding positions include His-12, Lys-16, Thr-38 to Thr-41, and Ser-59 to Gly-60. The active-site Proton donor/acceptor is the Asp-65. His-92 is a binding site for substrate.

Belongs to the methylglyoxal synthase family.

The catalysed reaction is dihydroxyacetone phosphate = methylglyoxal + phosphate. Its function is as follows. Catalyzes the formation of methylglyoxal from dihydroxyacetone phosphate. This chain is Methylglyoxal synthase, found in Allorhizobium ampelinum (strain ATCC BAA-846 / DSM 112012 / S4) (Agrobacterium vitis (strain S4)).